The sequence spans 194 residues: Peptidyl-tRNA hydrolase (194 aa).

Residue tyrosine 19 coordinates tRNA. Histidine 24 acts as the Proton acceptor in catalysis. Residues phenylalanine 69, asparagine 71, and asparagine 117 each contribute to the tRNA site.

The protein belongs to the PTH family. Monomer.

The protein localises to the cytoplasm. The catalysed reaction is an N-acyl-L-alpha-aminoacyl-tRNA + H2O = an N-acyl-L-amino acid + a tRNA + H(+). In terms of biological role, hydrolyzes ribosome-free peptidyl-tRNAs (with 1 or more amino acids incorporated), which drop off the ribosome during protein synthesis, or as a result of ribosome stalling. Its function is as follows. Catalyzes the release of premature peptidyl moieties from peptidyl-tRNA molecules trapped in stalled 50S ribosomal subunits, and thus maintains levels of free tRNAs and 50S ribosomes. In Neorickettsia sennetsu (strain ATCC VR-367 / Miyayama) (Ehrlichia sennetsu), this protein is Peptidyl-tRNA hydrolase.